A 247-amino-acid polypeptide reads, in one-letter code: Mast cell protease 8 (247 aa).

The signal sequence occupies residues 1 to 19 (MFLLLVLLVAALPVNAEGG). Residue Glu-20 is a propeptide, activation peptide. A Peptidase S1 domain is found at 21 to 242 (IIWGTESKPH…FMPWIRKTMK (222 aa)). Residue Asn-41 is glycosylated (N-linked (GlcNAc...) asparagine). A disulfide bridge links Cys-49 with Cys-65. Residue His-64 is the Charge relay system of the active site. Asn-71 and Asn-101 each carry an N-linked (GlcNAc...) asparagine glycan. Asp-107 acts as the Charge relay system in catalysis. 2 disulfides stabilise this stretch: Cys-141-Cys-206 and Cys-171-Cys-185. 2 N-linked (GlcNAc...) asparagine glycosylation sites follow: Asn-151 and Asn-179. The active-site Charge relay system is Ser-200.

The protein belongs to the peptidase S1 family. Granzyme subfamily.

It localises to the secreted. The protein resides in the cytoplasmic granule. The sequence is that of Mast cell protease 8 (Mcpt8) from Mus musculus (Mouse).